The following is a 170-amino-acid chain: Ureidoglycolate lyase 1 (170 aa).

It belongs to the ureidoglycolate lyase family. As to quaternary structure, homodimer. Requires Ni(2+) as cofactor.

The catalysed reaction is (S)-ureidoglycolate = urea + glyoxylate. It functions in the pathway nitrogen metabolism; (S)-allantoin degradation. Functionally, catalyzes the catabolism of the allantoin degradation intermediate (S)-ureidoglycolate, generating urea and glyoxylate. Involved in the utilization of allantoin as nitrogen source. This Rhizobium meliloti (strain 1021) (Ensifer meliloti) protein is Ureidoglycolate lyase 1.